Consider the following 364-residue polypeptide: Putative agmatine deiminase (364 aa).

The Amidino-cysteine intermediate role is filled by Cys-355.

It belongs to the agmatine deiminase family.

It carries out the reaction agmatine + H2O = N-carbamoylputrescine + NH4(+). The chain is Putative agmatine deiminase from Mycoplasma mycoides subsp. mycoides SC (strain CCUG 32753 / NCTC 10114 / PG1).